The chain runs to 260 residues: 4-hydroxy-tetrahydrodipicolinate reductase (260 aa).

NAD(+)-binding positions include 8–13 (GAAGRM), E35, 91–93 (GTT), and 115–118 (APNM). The active-site Proton donor/acceptor is the H148. A (S)-2,3,4,5-tetrahydrodipicolinate-binding site is contributed by H149. K152 acts as the Proton donor in catalysis. Position 158–159 (158–159 (GT)) interacts with (S)-2,3,4,5-tetrahydrodipicolinate.

It belongs to the DapB family.

Its subcellular location is the cytoplasm. The catalysed reaction is (S)-2,3,4,5-tetrahydrodipicolinate + NAD(+) + H2O = (2S,4S)-4-hydroxy-2,3,4,5-tetrahydrodipicolinate + NADH + H(+). It carries out the reaction (S)-2,3,4,5-tetrahydrodipicolinate + NADP(+) + H2O = (2S,4S)-4-hydroxy-2,3,4,5-tetrahydrodipicolinate + NADPH + H(+). Its pathway is amino-acid biosynthesis; L-lysine biosynthesis via DAP pathway; (S)-tetrahydrodipicolinate from L-aspartate: step 4/4. Functionally, catalyzes the conversion of 4-hydroxy-tetrahydrodipicolinate (HTPA) to tetrahydrodipicolinate. The chain is 4-hydroxy-tetrahydrodipicolinate reductase from Rubrobacter xylanophilus (strain DSM 9941 / JCM 11954 / NBRC 16129 / PRD-1).